The primary structure comprises 260 residues: Phosphate import ATP-binding protein PstB (260 aa).

Residues 14-255 (IETENLNLFY…PKNTKTEEYI (242 aa)) form the ABC transporter domain. Residue 46-53 (GPSGCGKS) participates in ATP binding.

It belongs to the ABC transporter superfamily. Phosphate importer (TC 3.A.1.7) family. The complex is composed of two ATP-binding proteins (PstB), two transmembrane proteins (PstC and PstA) and a solute-binding protein (PstS).

The protein localises to the cell inner membrane. The enzyme catalyses phosphate(out) + ATP + H2O = ADP + 2 phosphate(in) + H(+). In terms of biological role, part of the ABC transporter complex PstSACB involved in phosphate import. Responsible for energy coupling to the transport system. In Borreliella burgdorferi (strain ATCC 35210 / DSM 4680 / CIP 102532 / B31) (Borrelia burgdorferi), this protein is Phosphate import ATP-binding protein PstB.